Reading from the N-terminus, the 162-residue chain is Protein cornichon homolog 2 (162 aa).

Residues 1-10 lie on the Cytoplasmic side of the membrane; the sequence is MAFTFAAFCY. A helical transmembrane segment spans residues 11–31; it reads MLTLVLCASLIFFIIWHIIAF. Over 32–72 the chain is Lumenal; sequence DDLRTDFKDPIEQGNPSRARERIKNVERVCCLLRKLVVPEY. Residues 73–93 form a helical membrane-spanning segment; it reads CIHGLFCLMFMCAAEWVTLGL. At 94–138 the chain is on the cytoplasmic side; sequence NIPLLFYHLWRYFHRPADGSEVMFDPVSIMNVDILNYCQKEAWCK. A helical transmembrane segment spans residues 139-161; it reads LAFYLLSFFYYLYRVGATVRYVS. Residue Ala-162 is a topological domain, lumenal.

The protein belongs to the cornichon family.

Its subcellular location is the membrane. Regulates the trafficking and gating properties of AMPA-selective glutamate receptors (AMPARs). The polypeptide is Protein cornichon homolog 2 (cnih2) (Xenopus laevis (African clawed frog)).